A 273-amino-acid chain; its full sequence is 1,4-dihydroxy-2-naphthoyl-CoA synthase (273 aa).

Substrate is bound by residues Arg34, 73–77 (SGGDQ), Tyr85, 117–121 (YAVGG), Thr143, Ser149, Tyr246, and Lys261. Residue 142–144 (QTG) participates in hydrogencarbonate binding. Residues 254–265 (GRDAFKEKRDPD) show a composition bias toward basic and acidic residues. The disordered stretch occupies residues 254–273 (GRDAFKEKRDPDFDQFPKFP).

This sequence belongs to the enoyl-CoA hydratase/isomerase family. MenB subfamily. The cofactor is hydrogencarbonate.

It carries out the reaction 2-succinylbenzoyl-CoA + H(+) = 1,4-dihydroxy-2-naphthoyl-CoA + H2O. It functions in the pathway quinol/quinone metabolism; 1,4-dihydroxy-2-naphthoate biosynthesis; 1,4-dihydroxy-2-naphthoate from chorismate: step 6/7. Its pathway is quinol/quinone metabolism; menaquinone biosynthesis. In terms of biological role, converts o-succinylbenzoyl-CoA (OSB-CoA) to 1,4-dihydroxy-2-naphthoyl-CoA (DHNA-CoA). This Staphylococcus aureus (strain Mu50 / ATCC 700699) protein is 1,4-dihydroxy-2-naphthoyl-CoA synthase.